The primary structure comprises 92 residues: Putative pterin-4-alpha-carbinolamine dehydratase (92 aa).

Belongs to the pterin-4-alpha-carbinolamine dehydratase family.

It carries out the reaction (4aS,6R)-4a-hydroxy-L-erythro-5,6,7,8-tetrahydrobiopterin = (6R)-L-erythro-6,7-dihydrobiopterin + H2O. The protein is Putative pterin-4-alpha-carbinolamine dehydratase of Natronomonas pharaonis (strain ATCC 35678 / DSM 2160 / CIP 103997 / JCM 8858 / NBRC 14720 / NCIMB 2260 / Gabara) (Halobacterium pharaonis).